Consider the following 660-residue polypeptide: Bifunctional polymyxin resistance protein ArnA (660 aa).

The segment at 1-304 (MKAVIFAYHD…TLGLVAGARL (304 aa)) is formyltransferase ArnAFT. Histidine 104 serves as the catalytic Proton donor; for formyltransferase activity. (6R)-10-formyltetrahydrofolate is bound by residues arginine 114 and 136–140 (VKRAD). The tract at residues 314 to 660 (RRIRVLILGV…RSVDVAERAS (347 aa)) is dehydrogenase ArnADH. Residues aspartate 347 and 368-369 (DI) each bind NAD(+). Residues alanine 393, tyrosine 398, and 432 to 433 (TS) each bind UDP-alpha-D-glucuronate. The Proton acceptor; for decarboxylase activity role is filled by glutamate 434. UDP-alpha-D-glucuronate contacts are provided by residues arginine 460, asparagine 492, 526-535 (KLIDGGQQKR), and tyrosine 613. Residue arginine 619 is the Proton donor; for decarboxylase activity of the active site.

In the N-terminal section; belongs to the Fmt family. UDP-L-Ara4N formyltransferase subfamily. This sequence in the C-terminal section; belongs to the NAD(P)-dependent epimerase/dehydratase family. UDP-glucuronic acid decarboxylase subfamily. Homohexamer, formed by a dimer of trimers.

It carries out the reaction UDP-alpha-D-glucuronate + NAD(+) = UDP-beta-L-threo-pentopyranos-4-ulose + CO2 + NADH. The catalysed reaction is UDP-4-amino-4-deoxy-beta-L-arabinose + (6R)-10-formyltetrahydrofolate = UDP-4-deoxy-4-formamido-beta-L-arabinose + (6S)-5,6,7,8-tetrahydrofolate + H(+). It functions in the pathway nucleotide-sugar biosynthesis; UDP-4-deoxy-4-formamido-beta-L-arabinose biosynthesis; UDP-4-deoxy-4-formamido-beta-L-arabinose from UDP-alpha-D-glucuronate: step 1/3. It participates in nucleotide-sugar biosynthesis; UDP-4-deoxy-4-formamido-beta-L-arabinose biosynthesis; UDP-4-deoxy-4-formamido-beta-L-arabinose from UDP-alpha-D-glucuronate: step 3/3. Its pathway is bacterial outer membrane biogenesis; lipopolysaccharide biosynthesis. Functionally, bifunctional enzyme that catalyzes the oxidative decarboxylation of UDP-glucuronic acid (UDP-GlcUA) to UDP-4-keto-arabinose (UDP-Ara4O) and the addition of a formyl group to UDP-4-amino-4-deoxy-L-arabinose (UDP-L-Ara4N) to form UDP-L-4-formamido-arabinose (UDP-L-Ara4FN). The modified arabinose is attached to lipid A and is required for resistance to polymyxin and cationic antimicrobial peptides. This is Bifunctional polymyxin resistance protein ArnA from Salmonella paratyphi C (strain RKS4594).